Consider the following 142-residue polypeptide: Peptide methionine sulfoxide reductase MsrB (142 aa).

One can recognise a MsrB domain in the interval 10–132 (EEEWKKVLTP…NSVSLNFKTE (123 aa)). 4 residues coordinate Zn(2+): C49, C52, C98, and C101. C121 acts as the Nucleophile in catalysis.

The protein belongs to the MsrB Met sulfoxide reductase family. The cofactor is Zn(2+).

It carries out the reaction L-methionyl-[protein] + [thioredoxin]-disulfide + H2O = L-methionyl-(R)-S-oxide-[protein] + [thioredoxin]-dithiol. The chain is Peptide methionine sulfoxide reductase MsrB from Methanosarcina barkeri (strain Fusaro / DSM 804).